Reading from the N-terminus, the 341-residue chain is Methionine import ATP-binding protein MetN 2 (341 aa).

An ABC transporter domain is found at 2 to 241; sequence IEASELTKVY…PKAPLTQEFI (240 aa). Residue 38–45 participates in ATP binding; it reads GYSGAGKS.

This sequence belongs to the ABC transporter superfamily. Methionine importer (TC 3.A.1.24) family. In terms of assembly, the complex is composed of two ATP-binding proteins (MetN), two transmembrane proteins (MetI) and a solute-binding protein (MetQ).

The protein resides in the cell membrane. The enzyme catalyses L-methionine(out) + ATP + H2O = L-methionine(in) + ADP + phosphate + H(+). It carries out the reaction D-methionine(out) + ATP + H2O = D-methionine(in) + ADP + phosphate + H(+). Part of the ABC transporter complex MetNIQ involved in methionine import. Responsible for energy coupling to the transport system. In Shouchella clausii (strain KSM-K16) (Alkalihalobacillus clausii), this protein is Methionine import ATP-binding protein MetN 2.